The primary structure comprises 530 residues: Ubiquitin carboxyl-terminal hydrolase 17-like protein 19 (530 aa).

Residues 80 to 375 (AGLQNMGNTC…QAYVLFYIQK (296 aa)) enclose the USP domain. The Nucleophile role is filled by Cys89. His334 functions as the Proton acceptor in the catalytic mechanism. Basic and acidic residues-rich tracts occupy residues 382 to 392 (SESVSRGREPR) and 398 to 413 (DTDRRATQGELKRDHP). Disordered stretches follow at residues 382–413 (SESVSRGREPRALGAEDTDRRATQGELKRDHP) and 476–530 (KNHH…LVCQ). A compositionally biased stretch (low complexity) spans 484-495 (SSLLKLSSTTPT). Over residues 496–505 (HQESMNTGTL) the composition is skewed to polar residues. Over residues 510–524 (GRARRSKGKNKHSKR) the composition is skewed to basic residues.

Belongs to the peptidase C19 family. USP17 subfamily.

It is found in the nucleus. The protein resides in the endoplasmic reticulum. It catalyses the reaction Thiol-dependent hydrolysis of ester, thioester, amide, peptide and isopeptide bonds formed by the C-terminal Gly of ubiquitin (a 76-residue protein attached to proteins as an intracellular targeting signal).. Deubiquitinating enzyme that removes conjugated ubiquitin from specific proteins to regulate different cellular processes that may include cell proliferation, progression through the cell cycle, apoptosis, cell migration, and the cellular response to viral infection. In Homo sapiens (Human), this protein is Ubiquitin carboxyl-terminal hydrolase 17-like protein 19 (USP17L19).